The sequence spans 343 residues: Heat-inducible transcription repressor HrcA (343 aa).

The protein belongs to the HrcA family.

In terms of biological role, negative regulator of class I heat shock genes (grpE-dnaK-dnaJ and groELS operons). Prevents heat-shock induction of these operons. The protein is Heat-inducible transcription repressor HrcA of Bacillus subtilis (strain 168).